We begin with the raw amino-acid sequence, 170 residues long: Peptide deformylase (170 aa).

Residues Cys94 and His136 each contribute to the Fe cation site. The active site involves Glu137. His140 provides a ligand contact to Fe cation.

The protein belongs to the polypeptide deformylase family. It depends on Fe(2+) as a cofactor.

The catalysed reaction is N-terminal N-formyl-L-methionyl-[peptide] + H2O = N-terminal L-methionyl-[peptide] + formate. Its function is as follows. Removes the formyl group from the N-terminal Met of newly synthesized proteins. Requires at least a dipeptide for an efficient rate of reaction. N-terminal L-methionine is a prerequisite for activity but the enzyme has broad specificity at other positions. This is Peptide deformylase from Stenotrophomonas maltophilia (strain R551-3).